Reading from the N-terminus, the 529-residue chain is Autophagy-related protein 21 (529 aa).

Residues 49–62 (NSLEDSAGCQNPTH) show a composition bias toward polar residues. A disordered region spans residues 49-70 (NSLEDSAGCQNPTHSKTDSQDT). 2 WD repeats span residues 271-311 (AHHS…GKVK) and 321-361 (GHNL…SDIC). Residues 318–322 (LRRGH) carry the L/FRRG motif motif. Residues 362–388 (TNENSEDRTNHNSDYEDSDGDTSKSSE) are disordered. Residues 366–375 (SEDRTNHNSD) are compositionally biased toward basic and acidic residues.

It belongs to the WD repeat PROPPIN family.

The protein localises to the cytoplasm. It is found in the membrane. Its subcellular location is the vacuole membrane. In terms of biological role, required for cytoplasm to vacuole transport (Cvt) vesicles formation and mitophagy. Involved in binding of phosphatidylethanolamine to ATG8 and in recruitment of ATG8 and ATG5 to the pre-autophagosomal structure. Protects ATG8 from ARG4-mediated cleavage. This Candida albicans (strain SC5314 / ATCC MYA-2876) (Yeast) protein is Autophagy-related protein 21 (ATG21).